Here is a 933-residue protein sequence, read N- to C-terminus: Serine/threonine-protein kinase PknD (933 aa).

The 288-residue stretch at 4-291 folds into the Protein kinase domain; that stretch reads YDIIRMIGKG…ELKDDIEQHL (288 aa). Residues 10–18 and Lys-33 each bind ATP; that span reads IGKGGMGEV. Asp-138 functions as the Proton acceptor in the catalytic mechanism.

Belongs to the protein kinase superfamily. Ser/Thr protein kinase family. Autophosphorylated on serine and threonine residues.

The catalysed reaction is L-seryl-[protein] + ATP = O-phospho-L-seryl-[protein] + ADP + H(+). It catalyses the reaction L-threonyl-[protein] + ATP = O-phospho-L-threonyl-[protein] + ADP + H(+). Functionally, together with the serine/threonine kinase Pkn1, may play a role in the specific interactions with host proteins during intracellular growth. The sequence is that of Serine/threonine-protein kinase PknD from Chlamydia felis (strain Fe/C-56) (Chlamydophila felis).